A 693-amino-acid polypeptide reads, in one-letter code: Glycine--tRNA ligase beta subunit (693 aa).

Belongs to the class-II aminoacyl-tRNA synthetase family. Tetramer of two alpha and two beta subunits.

Its subcellular location is the cytoplasm. It carries out the reaction tRNA(Gly) + glycine + ATP = glycyl-tRNA(Gly) + AMP + diphosphate. This is Glycine--tRNA ligase beta subunit from Natranaerobius thermophilus (strain ATCC BAA-1301 / DSM 18059 / JW/NM-WN-LF).